Here is an 802-residue protein sequence, read N- to C-terminus: Fibroblast growth factor receptor 3 (802 aa).

An Ig-like C2-type 1 domain is found at 27–115; the sequence is PDYLMVEQPP…ILRNFTIRVT (89 aa). C52 and C98 are disulfide-bonded. 3 N-linked (GlcNAc...) asparagine glycosylation sites follow: N74, N87, and N109. The disordered stretch occupies residues 116–148; that stretch reads DLPSSGDDEDDDDDDDDETEDREPPRWTQPERM. Residues 121-136 are compositionally biased toward acidic residues; it reads GDDEDDDDDDDDETED. Residues 137 to 148 show a composition bias toward basic and acidic residues; the sequence is REPPRWTQPERM. Ig-like C2-type domains are found at residues 140–233 and 242–342; these read PRWT…YQLD and PILQ…FWLH. Cysteines 165 and 217 form a disulfide. Residues N214, N251, N283, N303, and N315 are each glycosylated (N-linked (GlcNAc...) asparagine). C264 and C326 are oxidised to a cystine. Residues 363–383 form a helical membrane-spanning segment; the sequence is ITVLIVVTSTIVFILLVIIVI. At 384-802 the chain is on the cytoplasmic side; it reads THLMKVPSKK…HQQHNGAIPT (419 aa). Positions 462-751 constitute a Protein kinase domain; that stretch reads LTLGKPLGEG…LTVTSTNEYL (290 aa). ATP contacts are provided by residues 468-476 and K498; that span reads LGEGCFGQV. Catalysis depends on D607, which acts as the Proton acceptor. 4 positions are modified to phosphotyrosine; by autocatalysis: Y637, Y638, Y714, and Y750.

This sequence belongs to the protein kinase superfamily. Tyr protein kinase family. Fibroblast growth factor receptor subfamily. In terms of assembly, monomer. Homodimer after ligand binding. Autophosphorylated. Binding of FGF family members together with heparan sulfate proteoglycan or heparin promotes receptor dimerization and autophosphorylation on tyrosine residues. Autophosphorylation occurs in trans between the two FGFR molecules present in the dimer.

The protein localises to the cell membrane. The enzyme catalyses L-tyrosyl-[protein] + ATP = O-phospho-L-tyrosyl-[protein] + ADP + H(+). Present in an inactive conformation in the absence of bound ligand. Ligand binding leads to dimerization and activation by autophosphorylation on tyrosine residues. In terms of biological role, tyrosine-protein kinase that acts as a cell-surface receptor for fibroblast growth factors and plays an essential role in the regulation of cell proliferation, differentiation and apoptosis. Plays an essential role in the regulation of chondrocyte differentiation, proliferation and apoptosis, and is required for normal skeleton development. Regulates both osteogenesis and postnatal bone mineralization by osteoblasts. Promotes apoptosis in chondrocytes, but can also promote cancer cell proliferation. Phosphorylates PLCG1, CBL and FRS2. Ligand binding leads to the activation of several signaling cascades. Activation of PLCG1 leads to the production of the cellular signaling molecules diacylglycerol and inositol 1,4,5-trisphosphate. Phosphorylation of FRS2 triggers recruitment of GRB2, GAB1, PIK3R1 and SOS1, and mediates activation of RAS, MAPK1/ERK2, MAPK3/ERK1 and the MAP kinase signaling pathway, as well as of the AKT1 signaling pathway. The chain is Fibroblast growth factor receptor 3 (fgfr3) from Xenopus laevis (African clawed frog).